A 247-amino-acid polypeptide reads, in one-letter code: ATP synthase subunit a, chloroplastic (247 aa).

5 helical membrane-spanning segments follow: residues 38–58 (QVLI…IIAV), 95–115 (VPFI…GALL), 134–154 (INTT…AGLS), 199–219 (LVVV…VMFL), and 220–240 (GLFT…AYIG).

This sequence belongs to the ATPase A chain family. In terms of assembly, F-type ATPases have 2 components, CF(1) - the catalytic core - and CF(0) - the membrane proton channel. CF(1) has five subunits: alpha(3), beta(3), gamma(1), delta(1), epsilon(1). CF(0) has four main subunits: a, b, b' and c.

The protein resides in the plastid. It localises to the chloroplast thylakoid membrane. Functionally, key component of the proton channel; it plays a direct role in the translocation of protons across the membrane. This is ATP synthase subunit a, chloroplastic from Sorghum bicolor (Sorghum).